Consider the following 93-residue polypeptide: Small ribosomal subunit protein bS20c (93 aa).

It belongs to the bacterial ribosomal protein bS20 family.

Its subcellular location is the plastid. It localises to the chloroplast. Functionally, binds directly to 16S ribosomal RNA. This Phaeodactylum tricornutum (strain CCAP 1055/1) protein is Small ribosomal subunit protein bS20c.